The primary structure comprises 316 residues: Biotin synthase (316 aa).

A Radical SAM core domain is found at 39–263 (NAIQCSTLLS…LFPKAYVRLS (225 aa)). [4Fe-4S] cluster contacts are provided by C54, C58, and C61. C98, C129, C189, and R261 together coordinate [2Fe-2S] cluster.

It belongs to the radical SAM superfamily. Biotin synthase family. Homodimer. Requires [4Fe-4S] cluster as cofactor. [2Fe-2S] cluster serves as cofactor.

It carries out the reaction (4R,5S)-dethiobiotin + (sulfur carrier)-SH + 2 reduced [2Fe-2S]-[ferredoxin] + 2 S-adenosyl-L-methionine = (sulfur carrier)-H + biotin + 2 5'-deoxyadenosine + 2 L-methionine + 2 oxidized [2Fe-2S]-[ferredoxin]. The protein operates within cofactor biosynthesis; biotin biosynthesis; biotin from 7,8-diaminononanoate: step 2/2. Its function is as follows. Catalyzes the conversion of dethiobiotin (DTB) to biotin by the insertion of a sulfur atom into dethiobiotin via a radical-based mechanism. This is Biotin synthase from Acidithiobacillus ferrooxidans (strain ATCC 23270 / DSM 14882 / CIP 104768 / NCIMB 8455) (Ferrobacillus ferrooxidans (strain ATCC 23270)).